Consider the following 323-residue polypeptide: Melanocortin receptor 3 (323 aa).

Residues 1–37 (MNSSCCLSSVSPMLPNLSEHPAAPPASNRSGSGFCEQ) lie on the Extracellular side of the membrane. Residues Asn2, Asn16, and Asn28 are each glycosylated (N-linked (GlcNAc...) asparagine). A helical transmembrane segment spans residues 38 to 63 (VFIKPEVFLALGIVSLMENILVILAV). At 64–75 (VRNGNLHSPMYF) the chain is on the cytoplasmic side. Residues 76 to 100 (FLCSLAAADMLVSLSNSLETIMIAV) form a helical membrane-spanning segment. Residues 101 to 118 (INSDSLTLEDQFIQHMDN) lie on the Extracellular side of the membrane. The chain crosses the membrane as a helical span at residues 119–140 (IFDSMICISLVASICNLLAIAI). Over 141 to 160 (DRYVTIFYALRYHSIMTVRK) the chain is Cytoplasmic. The chain crosses the membrane as a helical span at residues 161 to 181 (ALTLIGVIWVCCGICGVMFII). At 182–186 (YSESK) the chain is on the extracellular side. Residues 187–210 (MVIVCLITMFFAMVLLMGTLYIHM) form a helical membrane-spanning segment. Over 211-245 (FLFARLHVQRIAVLPPAGVVAPQQHSCMKGAVTIT) the chain is Cytoplasmic. The chain crosses the membrane as a helical span at residues 246-268 (ILLGVFIFCWAPFFLHLVLIITC). At 269-277 (PTNPYCICY) the chain is on the extracellular side. Residues 278-301 (TAHFNTYLVLIMCNSVIDPLIYAF) traverse the membrane as a helical segment. The Cytoplasmic portion of the chain corresponds to 302–323 (RSLELRNTFKEILCGCNSMNLG). A lipid anchor (S-palmitoyl cysteine) is attached at Cys315.

The protein belongs to the G-protein coupled receptor 1 family. As to expression, brain.

It is found in the cell membrane. In terms of biological role, receptor for MSH (alpha, beta and gamma) and ACTH. This receptor is mediated by G proteins which activate adenylate cyclase. Required for expression of anticipatory patterns of activity and wakefulness during periods of limited nutrient availability and for the normal regulation of circadian clock activity in the brain. In Mus musculus (Mouse), this protein is Melanocortin receptor 3 (Mc3r).